Here is a 344-residue protein sequence, read N- to C-terminus: Mitogen-activated protein kinase mpkC (344 aa).

The 280-residue stretch at 19–298 (YANVQPVGLG…AETALQHPYL (280 aa)) folds into the Protein kinase domain. Residues 25-33 (VGLGAFGLV) and lysine 48 each bind ATP. Aspartate 140 acts as the Proton acceptor in catalysis. Phosphothreonine is present on threonine 170. The TXY signature appears at 170–172 (TGY). Tyrosine 172 is modified (phosphotyrosine).

This sequence belongs to the protein kinase superfamily. Ser/Thr protein kinase family. MAP kinase subfamily. HOG1 sub-subfamily. It depends on Mg(2+) as a cofactor. Dually phosphorylated on Thr-170 and Tyr-172, which activates the enzyme.

The enzyme catalyses L-seryl-[protein] + ATP = O-phospho-L-seryl-[protein] + ADP + H(+). The catalysed reaction is L-threonyl-[protein] + ATP = O-phospho-L-threonyl-[protein] + ADP + H(+). With respect to regulation, activated by tyrosine and threonine phosphorylation. In terms of biological role, mitogen-activated protein kinase required for growth on media where sorbitol or mannitol is the sole carbon source. The chain is Mitogen-activated protein kinase mpkC (mpkC) from Aspergillus oryzae (strain ATCC 42149 / RIB 40) (Yellow koji mold).